A 211-amino-acid chain; its full sequence is Thymidylate kinase (211 aa).

7-14 contacts ATP; sequence GCEGSGKS.

It belongs to the thymidylate kinase family.

The catalysed reaction is dTMP + ATP = dTDP + ADP. In terms of biological role, phosphorylation of dTMP to form dTDP in both de novo and salvage pathways of dTTP synthesis. The chain is Thymidylate kinase from Chlamydia abortus (strain DSM 27085 / S26/3) (Chlamydophila abortus).